Consider the following 23-residue polypeptide: SLVELGKMILQETGKNPVTYGAY.

This sequence belongs to the phospholipase A2 family. Group II subfamily. K49 sub-subfamily. As to quaternary structure, homodimer; non-covalently linked (probable alternative/compact dimer conformation in solution). In terms of tissue distribution, expressed by the venom gland.

It localises to the secreted. Its function is as follows. Snake venom phospholipase A2 homolog that lacks enzymatic activity. Induces acute muscle damage after intramuscular injection in mice and disrupts negatively charged liposomes but not positively charged ones. Also exerts a weak anticoagulant effect only at concentrations of 40 ug/ml or higher. A model of myotoxic mechanism has been proposed: an apo Lys49-PLA2 is activated by the entrance of a hydrophobic molecule (e.g. fatty acid) at the hydrophobic channel of the protein leading to a reorientation of a monomer. This reorientation causes a transition between 'inactive' to 'active' states, causing alignment of C-terminal and membrane-docking sites (MDoS) side-by-side and putting the membrane-disruption sites (MDiS) in the same plane, exposed to solvent and in a symmetric position for both monomers. The MDoS region stabilizes the toxin on membrane by the interaction of charged residues with phospholipid head groups. Subsequently, the MDiS region destabilizes the membrane with penetration of hydrophobic residues. This insertion causes a disorganization of the membrane, allowing an uncontrolled influx of ions (i.e. calcium and sodium), and eventually triggering irreversible intracellular alterations and cell death. This chain is Phospholipase A2 homolog 4, found in Bothrops asper (Terciopelo).